Here is a 160-residue protein sequence, read N- to C-terminus: uncharacterized protein (160 aa).

Residues 1–33 are Extracellular-facing; that stretch reads MPLRPCRHHQGFLPKKQWRAKFPQLIVLMGRVA. Residues 34 to 54 form a helical membrane-spanning segment; the sequence is AEELLPAVAVAAVVVAVVVAV. Residues 55–68 are Cytoplasmic-facing; that stretch reads ERVVPLLFVHRPDS. Residues 69-89 traverse the membrane as a helical segment; sequence FFLIFFFQSCFVCCCCCCSCS. Topologically, residues 90–119 are extracellular; that stretch reads TSLKAYSSEKEKQKYGKRGNGNTPLVQRLV. Residues 120–140 form a helical membrane-spanning segment; the sequence is TLSYLALLILVLSIELLTWFV. The Cytoplasmic portion of the chain corresponds to 141-160; sequence KKQRTGNKKQKDKEKNALLL.

The protein localises to the membrane. This is an uncharacterized protein from Saccharomyces cerevisiae (strain ATCC 204508 / S288c) (Baker's yeast).